The chain runs to 504 residues: Acid phosphatase A (504 aa).

Positions 1 to 22 are cleaved as a signal peptide; it reads MYTLLDILKGLPLLAVAAIASA. N-linked (GlcNAc...) asparagine glycans are attached at residues asparagine 84, asparagine 112, asparagine 168, asparagine 260, asparagine 415, asparagine 450, and asparagine 474.

It belongs to the metallophosphoesterase superfamily. Purple acid phosphatase family. As to quaternary structure, monomer.

The protein resides in the secreted. The enzyme catalyses a phosphate monoester + H2O = an alcohol + phosphate. Its function is as follows. Acid phosphatase involved in the regulation of fungal phenotypic traits and virulence in C.parasitica. This chain is Acid phosphatase A, found in Cryphonectria parasitica (strain ATCC 38755 / EP155).